A 1461-amino-acid chain; its full sequence is Autotransporter adhesin SadA (1461 aa).

A signal peptide spans 1-54; that stretch reads MNRIFKVLWNAATGTFVVTSETAKSRGKKNGRRKLAVSALIGLSSIMVSADALA. The interval 55–1372 is surface exposed passenger domain; sequence NAGNDTGDGV…EEANTYTDQK (1318 aa). Residues 1373–1461 form a translocator domain region; that stretch reads MGEMNSKIKG…SAAIGAGFQW (89 aa). Beta stranded transmembrane passes span 1407-1417, 1421-1431, 1440-1446, and 1450-1461; these read GANMTSIAGGT, ESAVAIGVSMV, KLQGTSN, and DYSAAIGAGFQW.

The protein belongs to the autotransporter-2 (AT-2) (TC 1.B.40) family. In terms of assembly, homotrimer.

It is found in the cell surface. The protein resides in the cell outer membrane. Functionally, involved in cell aggregation, biofilm formation, and adhesion to human intestinal epithelial cells. The chain is Autotransporter adhesin SadA from Salmonella typhimurium (strain LT2 / SGSC1412 / ATCC 700720).